We begin with the raw amino-acid sequence, 75 residues long: Antitoxin MT0312 (75 aa).

Antitoxin component of a type II toxin-antitoxin (TA) system. The sequence is that of Antitoxin MT0312 from Mycobacterium tuberculosis (strain CDC 1551 / Oshkosh).